We begin with the raw amino-acid sequence, 1254 residues long: Juxtamembrane domain-associated catenin (1254 aa).

3 disordered regions span residues 1-38 (MISS…TMRK), 84-106 (AGPT…DNPP), and 145-209 (PYSN…SAPG). Positions 12 to 22 (PIPEEGTEADG) are enriched in acidic residues. Polar residues predominate over residues 145–157 (PYSNIDFDSSGLP). Fibronectin type-III domains lie at 207–302 (APGV…IPIS), 315–411 (APGR…IRPA), 428–518 (PPGQ…LRPT), and 530–624 (ILEA…IEPS). The interval 412 to 433 (APQRHVPARKVSESVQPPGQPQ) is disordered. The interval 662–685 (MVRESPPLPERDDSPPPLRRANNN) is disordered. ARM repeat units lie at residues 733-775 (GGIP…AVME), 777-820 (DGVR…ESAT), 874-922 (NLIE…YDPA), 969-1012 (HVVK…RAAV), and 1016-1058 (KGLP…KYAL). Residues 920–960 (DPAAAHSSSSKNMKHVASPKPEKKKKDKEKKKDKNPKNIVT) are disordered. Positions 1159-1254 (GTARRGDSST…GGGNIDDSWV (96 aa)) are disordered. The span at 1166–1176 (SSTLARPISSQ) shows a compositional bias: polar residues. Basic and acidic residues predominate over residues 1177–1187 (GRERPSMHQLD).

The protein belongs to the beta-catenin family. In terms of assembly, associated with the catenin-cadherin complex consisting of hmr-1, hmp-1 and hmp-2. Interacts with hmr-1. Interacts with picc-1. In terms of tissue distribution, epidermal cells.

The protein resides in the cell junction. It localises to the adherens junction. Its subcellular location is the nucleus. In terms of biological role, may act as a positive modulator of hmr-1 function during epidermal morphogenesis. Required for proper localization of other junctional components, such as pac-1. The chain is Juxtamembrane domain-associated catenin (jac-1) from Caenorhabditis elegans.